We begin with the raw amino-acid sequence, 548 residues long: MDDYEKSKVLTKRYKKLKKLLKMVYGYDNFRPRQYEIINKVINGEDVCAILMTSAGKSLCFQIPALYLDKPAIIISPLISLMEDQRLILEKLGISSCCYNSNVENKAQMRKDIMQFKYKFIYVSPESVVHLKDLIVKLEDFQGISLIAIDEAHCISAYGFDFRTAYREITFFKEILPNVPILALTATATNIVAKDICKVLQLKTNEPIKASFDRPNLYLEVRTKSKNPANDIVPIINKYPNQSVIIYCLTKKETQKIADILTVHKVVCGIYHAGLSNEHKTKTHTNFINNKIKIVVATIAFGMGINKPDVRVVIHYGAPKNIEGYYQEIGRAGRDGEKSYCYAFYNFQDFMIQRRFISQNNNPNYQKTQLALLEQMKKYVTLRTCRRKILLEYFDEETKEKCDFCDNCCGVHKNIVNENVTSKQNVQSEAKLIIELIESIPNRNFGVNMYINILRGSKNKAISPAIRKNKYYGLGSKHSSEWWKEVFDNLIKQGFLQSVSLKTGKFPIQVVKVTNKGVTWVSMADLGSLLDNIDNSVKLDPVEMVASV.

A Helicase ATP-binding domain is found at isoleucine 38 to glutamate 206. Leucine 51–serine 58 provides a ligand contact to ATP. Positions aspartate 150–histidine 153 match the DEAH box motif. Residues aspartate 231 to methionine 376 form the Helicase C-terminal domain.

Belongs to the DEAD box helicase family. DEAH subfamily.

The enzyme catalyses ATP + H2O = ADP + phosphate + H(+). The sequence is that of Putative ATP-dependent RNA helicase R290 from Acanthamoeba polyphaga mimivirus (APMV).